The chain runs to 432 residues: Glutamate-1-semialdehyde 2,1-aminomutase (432 aa).

An N6-(pyridoxal phosphate)lysine modification is found at lysine 272.

The protein belongs to the class-III pyridoxal-phosphate-dependent aminotransferase family. HemL subfamily. In terms of assembly, homodimer. Requires pyridoxal 5'-phosphate as cofactor.

Its subcellular location is the cytoplasm. It carries out the reaction (S)-4-amino-5-oxopentanoate = 5-aminolevulinate. It functions in the pathway porphyrin-containing compound metabolism; protoporphyrin-IX biosynthesis; 5-aminolevulinate from L-glutamyl-tRNA(Glu): step 2/2. It participates in porphyrin-containing compound metabolism; chlorophyll biosynthesis. The sequence is that of Glutamate-1-semialdehyde 2,1-aminomutase from Nostoc sp. (strain PCC 7120 / SAG 25.82 / UTEX 2576).